Consider the following 1020-residue polypeptide: LLGL scribble cell polarity complex component 2 (1020 aa).

WD repeat units lie at residues 36–69, 76–117, 132–169, 193–227, 233–268, 282–324, 332–366, 388–464, 508–583, 592–653, 713–769, 778–830, 835–888, and 902–925; these read SALGYSPSLRILAIGTRSGAIKLYGAPGVEFMGL, VTQI…DESF, ITVVLPHSSCELLYLGTESGNVFVVQLPAFRALEDRTI, ALQEHPRDPNQILIGYSRGLVVIWDLQGSRVLYHF, LENIWWQRDGRLLVSCHSDGSYCQWPVSSEAQQPEP, AITR…GQQT, VIGFTVLTEADPAATFDDPYALVVLAEEELVVIDL, TCSH…YKLS, QKIF…FVLV, TSLA…LRQS, VRTL…KEIQ, GILV…VSAK, LTAL…VRYS, and VFTKYGQGFYLISPSEFERFSLST. At Ser-653 the chain carries Phosphoserine. Residues 653-669 show a composition bias toward basic residues; sequence SFRRMRRSRVSSRKRHP. Residues 653–689 form a disordered region; the sequence is SFRRMRRSRVSSRKRHPAGPPGEAQEGSAKAERPGLQ. Disordered regions lie at residues 938–975 and 992–1020; these read AETKNHRPGNGAGPKKAPSRARNSGTQSDGEEKQPGLV and STLEGDRGSGNWRSHRAAVGCSLSNGGAE. A phosphoserine mark is found at Ser-965 and Ser-1015.

This sequence belongs to the WD repeat L(2)GL family. As to quaternary structure, interacts with GPSM2/LGN, PRKCI/aPKC and PARD6B/Par-6. The complex is enhanced during mitosis. Interacts with DCAF1. Phosphorylated at Ser-653 by PRKCI. Phosphorylation is enhanced during cell polarization induced by calcium. Phosphorylation may occur during the cell-cell contact-induced cell polarization and may contribute to the segregation of LLGL2 from the PRKCI/aPKC and PARD6B/Par-6 complex.

It localises to the cytoplasm. In terms of biological role, part of a complex with GPSM2/LGN, PRKCI/aPKC and PARD6B/Par-6, which may ensure the correct organization and orientation of bipolar spindles for normal cell division. This complex plays roles in the initial phase of the establishment of epithelial cell polarity. This chain is LLGL scribble cell polarity complex component 2 (LLGL2), found in Homo sapiens (Human).